The chain runs to 192 residues: MLLSDRDLAAEIKAGTLALEPFDPALVQPSSIDVRLDKLFRVFNNHLYTHIDPSRQQDDLTSTVEVPAGEPFVLHPGEFVLASTLEVISLGDQLAGRLEGKSSLGRLGLLTHSTAGFIDPGFSGHVTLELSNVANLPIMLWPGMKIGQLCIFRLSSPAEYPYGSAVYGSRYQGQRGPTPSRSWQSWHTWPTR.

DCTP is bound by residues 101–106 (KSSLGR), Asp119, 127–129 (TLE), Gln148, Tyr162, and Gln174. Glu129 acts as the Proton donor/acceptor in catalysis. The disordered stretch occupies residues 171-192 (YQGQRGPTPSRSWQSWHTWPTR).

Belongs to the dCTP deaminase family. In terms of assembly, homotrimer.

The enzyme catalyses dCTP + 2 H2O = dUMP + NH4(+) + diphosphate. It functions in the pathway pyrimidine metabolism; dUMP biosynthesis; dUMP from dCTP: step 1/1. In terms of biological role, bifunctional enzyme that catalyzes both the deamination of dCTP to dUTP and the hydrolysis of dUTP to dUMP without releasing the toxic dUTP intermediate. This chain is dCTP deaminase, dUMP-forming, found in Salinispora arenicola (strain CNS-205).